The sequence spans 376 residues: NifS-like protein (376 aa).

Residues 58 to 59 (SE) and 184 to 186 (SLN) each bind pyridoxal 5'-phosphate.

The protein belongs to the class-V pyridoxal-phosphate-dependent aminotransferase family. NifS/IscS subfamily. Pyridoxal 5'-phosphate serves as cofactor.

Its subcellular location is the virion. This is NifS-like protein from African swine fever virus (isolate Tick/Malawi/Lil 20-1/1983) (ASFV).